We begin with the raw amino-acid sequence, 216 residues long: ATP phosphoribosyltransferase (216 aa).

It belongs to the ATP phosphoribosyltransferase family. Short subfamily. As to quaternary structure, heteromultimer composed of HisG and HisZ subunits.

The protein resides in the cytoplasm. It carries out the reaction 1-(5-phospho-beta-D-ribosyl)-ATP + diphosphate = 5-phospho-alpha-D-ribose 1-diphosphate + ATP. Its pathway is amino-acid biosynthesis; L-histidine biosynthesis; L-histidine from 5-phospho-alpha-D-ribose 1-diphosphate: step 1/9. Catalyzes the condensation of ATP and 5-phosphoribose 1-diphosphate to form N'-(5'-phosphoribosyl)-ATP (PR-ATP). Has a crucial role in the pathway because the rate of histidine biosynthesis seems to be controlled primarily by regulation of HisG enzymatic activity. This Lachnospira eligens (strain ATCC 27750 / DSM 3376 / VPI C15-48 / C15-B4) (Eubacterium eligens) protein is ATP phosphoribosyltransferase.